Consider the following 453-residue polypeptide: Trigger factor (453 aa).

Residues 171–256 (GDRVTINFKG…ATSIEAPQDI (86 aa)) enclose the PPIase FKBP-type domain.

It belongs to the FKBP-type PPIase family. Tig subfamily.

It localises to the cytoplasm. It catalyses the reaction [protein]-peptidylproline (omega=180) = [protein]-peptidylproline (omega=0). In terms of biological role, involved in protein export. Acts as a chaperone by maintaining the newly synthesized protein in an open conformation. Functions as a peptidyl-prolyl cis-trans isomerase. This Bradyrhizobium diazoefficiens (strain JCM 10833 / BCRC 13528 / IAM 13628 / NBRC 14792 / USDA 110) protein is Trigger factor.